A 489-amino-acid chain; its full sequence is Glycogen synthase (489 aa).

Arg20 is an ADP-alpha-D-glucose binding site.

The protein belongs to the glycosyltransferase 1 family. Bacterial/plant glycogen synthase subfamily.

The enzyme catalyses [(1-&gt;4)-alpha-D-glucosyl](n) + ADP-alpha-D-glucose = [(1-&gt;4)-alpha-D-glucosyl](n+1) + ADP + H(+). The protein operates within glycan biosynthesis; glycogen biosynthesis. Its function is as follows. Synthesizes alpha-1,4-glucan chains using ADP-glucose. The sequence is that of Glycogen synthase from Pelodictyon phaeoclathratiforme (strain DSM 5477 / BU-1).